Reading from the N-terminus, the 105-residue chain is Synaptic plasticity regulator PANTS (105 aa).

The protein belongs to the UPF0545 family. In terms of assembly, interacts with RTN4 isoform A/Nogo-A; the interaction results in enhanced RTN4-mediated inhibition of AMPA receptor clustering. Also interacts with NCAM1, RANBP2 and CCT8. In terms of processing, rapidly degraded by proteolysis following neuronal stimulation, resulting in increased AMPA receptor clustering.

The protein localises to the synapse. It is found in the synaptic cleft. Its function is as follows. Negatively regulates long-term potentiation and modulates adult synaptic plasticity. Stabilizes the interaction of RTN4 isoform A/Nogo-A with its receptors, inhibiting clustering of postsynaptic AMPA receptors at synaptic sites. Upon neuronal stimulation, degraded at synapses, reducing RTN4 signaling and allowing AMPA receptor clustering at individual synapses. This is Synaptic plasticity regulator PANTS from Pongo abelii (Sumatran orangutan).